Consider the following 346-residue polypeptide: 36.4 kDa proline-rich protein (346 aa).

The tract at residues 11-144 (PYPPSTPKHP…PFTPKPPSPI (134 aa)) is disordered. Composition is skewed to pro residues over residues 25–42 (KVKP…PSTP), 51–81 (VKPP…PSTP), and 89–144 (QKPC…PSPI).

In Solanum lycopersicum (Tomato), this protein is 36.4 kDa proline-rich protein (TPRP-F1).